Consider the following 456-residue polypeptide: Serine--tRNA ligase (456 aa).

Disordered stretches follow at residues 107 to 130 and 229 to 253; these read PHSS…GTPP and FLEN…QDDD. Over residues 114–125 the composition is skewed to basic and acidic residues; sequence GRSESDNREVRR. Residues 239–248 are compositionally biased toward polar residues; sequence LPSNSNSPQG. Position 260–262 (260–262) interacts with L-serine; that stretch reads TSE. ATP is bound at residue 291-293; the sequence is RSE. L-serine is bound at residue glutamate 314. 378–381 serves as a coordination point for ATP; that stretch reads EISS. Serine 413 contributes to the L-serine binding site.

Belongs to the class-II aminoacyl-tRNA synthetase family. Type-1 seryl-tRNA synthetase subfamily. As to quaternary structure, homodimer. The tRNA molecule binds across the dimer.

Its subcellular location is the cytoplasm. The enzyme catalyses tRNA(Ser) + L-serine + ATP = L-seryl-tRNA(Ser) + AMP + diphosphate + H(+). The catalysed reaction is tRNA(Sec) + L-serine + ATP = L-seryl-tRNA(Sec) + AMP + diphosphate + H(+). Its pathway is aminoacyl-tRNA biosynthesis; selenocysteinyl-tRNA(Sec) biosynthesis; L-seryl-tRNA(Sec) from L-serine and tRNA(Sec): step 1/1. Catalyzes the attachment of serine to tRNA(Ser). Is also able to aminoacylate tRNA(Sec) with serine, to form the misacylated tRNA L-seryl-tRNA(Sec), which will be further converted into selenocysteinyl-tRNA(Sec). In Nitrosospira multiformis (strain ATCC 25196 / NCIMB 11849 / C 71), this protein is Serine--tRNA ligase.